A 234-amino-acid chain; its full sequence is Ammonia monooxygenase gamma subunit (234 aa).

The first 20 residues, 1-20 (MRMIKFLLLAILLAPFVAHS), serve as a signal peptide directing secretion. The Cytochrome c domain maps to 38-193 (ESLQRGAKGF…RFVADLVNYM (156 aa)). Heme c contacts are provided by Cys-51, Cys-54, and His-55. The chain crosses the membrane as a helical span at residues 206–226 (ELGITVLLFLFGMLGLTYLLK).

It belongs to the cytochrome c family. In terms of assembly, the soluble ammonia monooxygenase is a nonamer composed of three alpha subunits (AmoA), three beta subunits (AmoB) and three gamma subunits (Cytochrome c1 PetC). It depends on heme c as a cofactor.

The protein resides in the cell membrane. It localises to the cytoplasm. Its function is as follows. Part of the ammonia monooxygenase complex, which catalyzes the oxidation of ammonia to hydroxylamine, the first reaction in the process of ammonia oxidation to nitrite. This is Ammonia monooxygenase gamma subunit from Nitrosomonas europaea (strain ATCC 19718 / CIP 103999 / KCTC 2705 / NBRC 14298).